The following is a 405-amino-acid chain: GTPase Obg (405 aa).

The Obg domain maps to 1–159; the sequence is MRFIDEAVVT…KVLKFELKVV (159 aa). Positions 160–333 constitute an OBG-type G domain; the sequence is ADVGLIGLPN…IKYHLMNEIE (174 aa). GTP-binding positions include 166–173, 191–195, 213–216, 283–286, and 314–316; these read GLPNAGKS, FTTLV, DIPG, NKID, and ATL. Ser-173 and Thr-193 together coordinate Mg(2+). Positions 371 to 382 are enriched in basic and acidic residues; the sequence is YRAARKAAREGT. The segment at 371–405 is disordered; sequence YRAARKAAREGTDLSDDDFDGSDDDDDGVEVIYAP. Acidic residues predominate over residues 383–399; it reads DLSDDDFDGSDDDDDGV.

The protein belongs to the TRAFAC class OBG-HflX-like GTPase superfamily. OBG GTPase family. Monomer. The cofactor is Mg(2+).

The protein resides in the cytoplasm. In terms of biological role, an essential GTPase which binds GTP, GDP and possibly (p)ppGpp with moderate affinity, with high nucleotide exchange rates and a fairly low GTP hydrolysis rate. Plays a role in control of the cell cycle, stress response, ribosome biogenesis and in those bacteria that undergo differentiation, in morphogenesis control. This is GTPase Obg from Psychrobacter arcticus (strain DSM 17307 / VKM B-2377 / 273-4).